The primary structure comprises 288 residues: MDSIKIALQYMLPKHFLSRLVGKFAAAEAGAITTAVIKWFIKQYKIDMSEAQQPEPEAYKTFNAFFTRALKPELRPICQESNMMAHPVDGAVSQCGPIEAGNIFQAKGHSYTSEALLGGNKTDAARFDGGDFATIYLAPKDYHRLHMPITGTLSKMTYVPGDLFSVNPLTAQNVPGLFARNERVVAIFETEVGPLAMVLVGATIVASIETIWSGTVTPPGGKQVFSWDYPTTGPEAVTLEKGAEMGRFKLGSTVVMLFAQDAIETFADGVEPGETTRMGQPFARLKQQ.

Residues Asp89, His146, and Ser252 each act as charge relay system; for autoendoproteolytic cleavage activity in the active site. The active-site Schiff-base intermediate with substrate; via pyruvic acid; for decarboxylase activity is Ser252. Ser252 carries the post-translational modification Pyruvic acid (Ser); by autocatalysis.

Belongs to the phosphatidylserine decarboxylase family. PSD-B subfamily. Prokaryotic type I sub-subfamily. Heterodimer of a large membrane-associated beta subunit and a small pyruvoyl-containing alpha subunit. Requires pyruvate as cofactor. Post-translationally, is synthesized initially as an inactive proenzyme. Formation of the active enzyme involves a self-maturation process in which the active site pyruvoyl group is generated from an internal serine residue via an autocatalytic post-translational modification. Two non-identical subunits are generated from the proenzyme in this reaction, and the pyruvate is formed at the N-terminus of the alpha chain, which is derived from the carboxyl end of the proenzyme. The autoendoproteolytic cleavage occurs by a canonical serine protease mechanism, in which the side chain hydroxyl group of the serine supplies its oxygen atom to form the C-terminus of the beta chain, while the remainder of the serine residue undergoes an oxidative deamination to produce ammonia and the pyruvoyl prosthetic group on the alpha chain. During this reaction, the Ser that is part of the protease active site of the proenzyme becomes the pyruvoyl prosthetic group, which constitutes an essential element of the active site of the mature decarboxylase.

Its subcellular location is the cell membrane. It carries out the reaction a 1,2-diacyl-sn-glycero-3-phospho-L-serine + H(+) = a 1,2-diacyl-sn-glycero-3-phosphoethanolamine + CO2. It functions in the pathway phospholipid metabolism; phosphatidylethanolamine biosynthesis; phosphatidylethanolamine from CDP-diacylglycerol: step 2/2. Its function is as follows. Catalyzes the formation of phosphatidylethanolamine (PtdEtn) from phosphatidylserine (PtdSer). The polypeptide is Phosphatidylserine decarboxylase proenzyme (Shewanella frigidimarina (strain NCIMB 400)).